We begin with the raw amino-acid sequence, 276 residues long: Non-heme chloroperoxidase (276 aa).

In terms of domain architecture, AB hydrolase-1 spans 24 to 254 (PVVFHHGWPL…NATLKSYEGL (231 aa)). Catalysis depends on residues serine 97, aspartate 227, and histidine 256.

Belongs to the AB hydrolase superfamily. Bacterial non-heme haloperoxidase / perhydrolase family. As to quaternary structure, homodimer.

The polypeptide is Non-heme chloroperoxidase (cpo) (Streptomyces lividans).